Reading from the N-terminus, the 150-residue chain is MQVILLDKVANLGSLGDQVNVKAGYARNFLVPQGKAVPATKKNVEFFEARRAELEAKLADVLAAAEARATKINELVSVTISSKAGDEGKLFGSIGTRDIADAVTAAGVEVAKSEVRLPNGVLRTAGEHEVHFQVHSDVFAKLNVVVVPEA.

This sequence belongs to the bacterial ribosomal protein bL9 family.

Its function is as follows. Binds to the 23S rRNA. This Yersinia pseudotuberculosis serotype I (strain IP32953) protein is Large ribosomal subunit protein bL9.